Here is a 373-residue protein sequence, read N- to C-terminus: Gibberellin 3-beta-dioxygenase 2 (373 aa).

The Fe2OG dioxygenase domain occupies 203-304; sequence MTATVHLNWY…RVSLGYFLGP (102 aa). Tyrosine 212 serves as a coordination point for 2-oxoglutarate. Residues histidine 227, aspartate 229, and histidine 285 each coordinate Fe cation. 2-oxoglutarate contacts are provided by arginine 295 and serine 297.

The protein belongs to the iron/ascorbate-dependent oxidoreductase family. L-ascorbate serves as cofactor. Fe(2+) is required as a cofactor. As to expression, highly expressed in elongating leaves. Expressed in unopened flowers. Expressed at low levels in leaf blades, shoots, rachis, stems and young panicles.

The enzyme catalyses gibberellin A20 + 2-oxoglutarate + O2 = gibberellin A1 + succinate + CO2. It participates in plant hormone biosynthesis; gibberellin biosynthesis. In terms of biological role, catalyzes the 3-beta-hydroxylation of the inactive gibberellin precursors, leading to the formation of bioactive gibberellins. In vitro, converts the precursors GA20, GA5, GA44 and GA9 to the corresponding 3-beta-hydroxylated active products GA1, GA3, GA38 and GA4, respectively. Involved in the production of bioactive GA for vegetative growth and development. Controls the elongation of the vegetative shoot and plant height by the regulation of active gibberellin levels. The chain is Gibberellin 3-beta-dioxygenase 2 from Oryza sativa subsp. japonica (Rice).